The following is a 547-amino-acid chain: CDK5RAP1-like protein (547 aa).

In terms of domain architecture, MTTase N-terminal spans 79-194 (RTVCYVTYGC…LPRLVAVAAG (116 aa)). 6 residues coordinate [4Fe-4S] cluster: C88, C124, C157, C232, C236, and C239. Residues 218 to 475 (DSASKTAFIS…TTVFREEALK (258 aa)) enclose the Radical SAM core domain. The TRAM domain occupies 478-543 (QALIGSEQTV…SQTLKAQLIG (66 aa)).

This sequence belongs to the methylthiotransferase family. MiaB subfamily. [4Fe-4S] cluster is required as a cofactor.

Functionally, potential regulator of CDK5 activity. The protein is CDK5RAP1-like protein of Caenorhabditis elegans.